Consider the following 376-residue polypeptide: Heme-dependent oxidative N-demethylase gamma subunit (376 aa).

As to quaternary structure, the heme-dependent oxidative N-demethylase (HODM) is a heterotetramer composed of a catalytic alpha subunit, a FMN/2Fe-2S-dependent oxidoreductase beta subunit, a gamma subunit with putative aminotransferase activity, and a delta subunit of unknown function.

Component of the heme-dependent oxidative N-demethylase (HODM) enzyme, that catalyzes the NADPH-dependent oxidation of dimethylamine (DMA) to methylamine (MA) and formaldehyde. Functions in bacterial methylated amine catabolism, linking alkylamine oxidation to the tetrahydrofolate C1 pool. The gamma subunit of HODM may act as an aminomethyltransferase involved in the detoxification of formaldehyde released by the alpha subunit; this process requires tetrahydrofolate (THF). The protein is Heme-dependent oxidative N-demethylase gamma subunit of Ectopseudomonas mendocina (strain ymp) (Pseudomonas mendocina).